Reading from the N-terminus, the 314-residue chain is Protoheme IX farnesyltransferase (314 aa).

The next 7 membrane-spanning stretches (helical) occupy residues 58-78 (LWLV…ASVF), 107-127 (AALV…YVWV), 130-150 (LSAA…TMLL), 173-193 (WTAV…VVFF), 227-247 (VGRQ…LLWP), 248-268 (VAGT…VFLL), and 294-314 (SSNL…LLAG).

This sequence belongs to the UbiA prenyltransferase family. Protoheme IX farnesyltransferase subfamily.

Its subcellular location is the cell membrane. It carries out the reaction heme b + (2E,6E)-farnesyl diphosphate + H2O = Fe(II)-heme o + diphosphate. Its pathway is porphyrin-containing compound metabolism; heme O biosynthesis; heme O from protoheme: step 1/1. Its function is as follows. Converts heme B (protoheme IX) to heme O by substitution of the vinyl group on carbon 2 of heme B porphyrin ring with a hydroxyethyl farnesyl side group. The sequence is that of Protoheme IX farnesyltransferase from Nocardioides sp. (strain ATCC BAA-499 / JS614).